A 478-amino-acid chain; its full sequence is ATP synthase subunit beta (478 aa).

Position 151 to 158 (151 to 158 (GGAGVGKT)) interacts with ATP.

It belongs to the ATPase alpha/beta chains family. As to quaternary structure, F-type ATPases have 2 components, CF(1) - the catalytic core - and CF(0) - the membrane proton channel. CF(1) has five subunits: alpha(3), beta(3), gamma(1), delta(1), epsilon(1). CF(0) has three main subunits: a(1), b(2) and c(9-12). The alpha and beta chains form an alternating ring which encloses part of the gamma chain. CF(1) is attached to CF(0) by a central stalk formed by the gamma and epsilon chains, while a peripheral stalk is formed by the delta and b chains.

It localises to the cell inner membrane. The enzyme catalyses ATP + H2O + 4 H(+)(in) = ADP + phosphate + 5 H(+)(out). In terms of biological role, produces ATP from ADP in the presence of a proton gradient across the membrane. The catalytic sites are hosted primarily by the beta subunits. The chain is ATP synthase subunit beta from Azorhizobium caulinodans (strain ATCC 43989 / DSM 5975 / JCM 20966 / LMG 6465 / NBRC 14845 / NCIMB 13405 / ORS 571).